A 397-amino-acid polypeptide reads, in one-letter code: Elongation factor Tu 1 (397 aa).

The 197-residue stretch at 10 to 206 folds into the tr-type G domain; it reads KPHVNIGTIG…AIDTWIPEPV (197 aa). Residues 19–26 are G1; the sequence is GHVDHGKT. 19–26 contributes to the GTP binding site; it reads GHVDHGKT. Residue Thr-26 participates in Mg(2+) binding. The interval 61-65 is G2; sequence GITIS. Positions 82–85 are G3; the sequence is DCPG. GTP is bound by residues 82–86 and 137–140; these read DCPGH and NKCD. The interval 137–140 is G4; sequence NKCD. A G5 region spans residues 175–177; it reads SAL.

The protein belongs to the TRAFAC class translation factor GTPase superfamily. Classic translation factor GTPase family. EF-Tu/EF-1A subfamily. In terms of assembly, monomer.

It localises to the cytoplasm. The enzyme catalyses GTP + H2O = GDP + phosphate + H(+). Functionally, GTP hydrolase that promotes the GTP-dependent binding of aminoacyl-tRNA to the A-site of ribosomes during protein biosynthesis. In Alkaliphilus metalliredigens (strain QYMF), this protein is Elongation factor Tu 1.